Consider the following 455-residue polypeptide: uncharacterized protein (455 aa).

Asparagine 42, asparagine 49, and asparagine 70 each carry an N-linked (GlcNAc...) asparagine glycan. The next 4 helical transmembrane spans lie at 127–147, 153–173, 177–197, and 377–397; these read AILI…TWIF, SLLD…MFRI, ICAL…ITYY, and YKFC…EIIF. A glycan (N-linked (GlcNAc...) asparagine) is linked at asparagine 403.

It localises to the membrane. This is an uncharacterized protein from Caenorhabditis elegans.